The primary structure comprises 566 residues: MQVQKMVRDNSNNGSDKSVHWERRNNNGAGPRYRSRSGNTGALATKLSNGTLSVRGLVKDRTGSGKIAGCVEAFLDARTQLNTPWDRAKCNWLDQIDYYVQLRKTAFSKELDQLRKPMIDAYVAEMRQKFDASYGQSRAQLEAKLAQVDSEWHMVHGDVHAKLEKLVEERRFLKRLSDTIVPPRSKRSQRLSPLTKEDRANCICPQPKGMSDTAWFEAIQKKMLGMNGTIKLLETEQKLLADEKNSVRKTFWPMVEAHSRSNEFAYLEKCIRLMASQRAICFCLDIEAFETNQNVITEIGISIYDPRENMVPSMVPITKNYHLIIEESLELRNQKWVCDYKDCYLLGESYVLSLKECVHFIQSLINYYLVPVTEEDKTWSRAFVGHHVSGDLKWLETIGVKFPGRGYEGHLDHTLLLAETPGDLDVFILDTEQFYRKSYGEKGSSLGKILRLFEIPHAFLHNAGNDAYYTLHLFMKFCDVNFRKISGMDDVLKVMGQVKVWGERDVREPKVVPMSYAISIEEAVKNRTYRKGVKSSRKERVCQTEFGGLTYFGTAKDAFTSTLPTH.

A compositionally biased stretch (polar residues) spans 1-16 (MQVQKMVRDNSNNGSD). A disordered region spans residues 1 to 41 (MQVQKMVRDNSNNGSDKSVHWERRNNNGAGPRYRSRSGNTG).

Functionally, high-copy suppressor of DBP5 mutation. This Saccharomyces cerevisiae (strain ATCC 204508 / S288c) (Baker's yeast) protein is Good for full DBP5 activity protein 2 (GFD2).